We begin with the raw amino-acid sequence, 1226 residues long: MGSQIRAQIEAQLKQRILLIDGGMGTMIQGYKLQEQDYRGERFADWHSDLKGNNDLLVLTQPQLIKEIHHAYLEAGADILETNTFNATTIAMADYDMESLSEEINFAAARLAREAADEWTAQNPAKPRYVAGVLGPTNRTCSISPDVNDPGYRNVSFDELVEAYSESTRALIRGGSDLILIETIFDTLNAKACAFAVDSVFEELGFALPVMISGTITDASGRTLSGQTTEAFYNSLRHVRPISFGLNCALGPDELRPYVEELSRISETFVSTHPNAGLPNAFGEYDLSPEEMAEHVKEWAQSGFLNLIGGCCGTTPEHIRHMAMAVEGVSPRVLPEIPVACRLSGLEPLTIAKDTLFVNVGERTNVTGSARFKRLIKEELYDEALDVAREQVENGAQIIDINMDEGMLDAEACMVRFLNLCASEPEISKVPIMVDSSKWEVIEAGLKCIQGKGIVNSISLKEGKEKFVEQAKLIRRYGAAVIVMAFDEVGQADTRERKLEICTKAYRILVDEVGFPPEDVIFDPNIFAVATGIDEHNNYAVDFIEAVADIKRDLPHAMISGGVSNVSFSFRGNNYVREAIHAVFLYHCFKNGMDMGIVNAGQLEIYDNVPEKLREAVEDVVLNRRDDATERLLEIAEEYRENAVGKQEDASALEWRTWSVEKRLEHALVKGITEFIVEDTEEARLNASKPLEVIEGPLMDGMNVVGDLFGEGKMFLPQVVKSARVMKQAVAHLEPFINASKQAGSSNGKILLATVKGDVHDIGKNIVGVVLQCNNYEIIDLGVMVPCEQILKVAKEQQVDIIGLSGLITPSLDEMVHVAKEMERLGFDLPLLIGGATTSKAHTAVKIEQNYSHPVVYVNNASRAVGVCTSLLSDELRPAFVERLQADYELVRDQHNRKKPRTKPVTLEAARANKVAIDWQSYTPPAPSQPGVHVFDDFDVATLRQYIDWTPFFLTWSLVGKYPTIFEHEEVGEEAKRLFGDANEWLDRIEQEGLLKARGMCGLFPAASVGDDIEVYTDESRTHVAKVLHNLRQQTEKPKGANYCLSDYVAPKESGKKDWIGAFAVTGGVNERELADQFKAQGDDYNAIMIQAVADRLAEAFAEYLHERVRKEIWGYAADENLSNEELIREKYQGIRPAPGYPACPEHTEKGPLWELLNVEETIGMSLTSSYAMWPGASVSGWYFSHPDSRYFAIAQIQQDQVESYAERKGWDLLEAEKWLGPNING.

Residues 6-326 (RAQIEAQLKQ…EHIRHMAMAV (321 aa)) enclose the Hcy-binding domain. 3 residues coordinate Zn(2+): Cys248, Cys311, and Cys312. Positions 357–618 (FVNVGERTNV…VPEKLREAVE (262 aa)) constitute a Pterin-binding domain. One can recognise a B12-binding N-terminal domain in the interval 651 to 745 (SALEWRTWSV…FINASKQAGS (95 aa)). Methylcob(III)alamin is bound by residues Glu695, 757 to 761 (GDVHD), His760, Ser805, Thr809, and Ala861. Positions 747 to 882 (NGKILLATVK…SDELRPAFVE (136 aa)) constitute a B12-binding domain. The AdoMet activation domain maps to 898-1226 (KKPRTKPVTL…EKWLGPNING (329 aa)). Residues Asp948, Arg1136, and 1191 to 1192 (YF) contribute to the S-adenosyl-L-methionine site.

This sequence belongs to the vitamin-B12 dependent methionine synthase family. Methylcob(III)alamin serves as cofactor. The cofactor is Zn(2+).

It carries out the reaction (6S)-5-methyl-5,6,7,8-tetrahydrofolate + L-homocysteine = (6S)-5,6,7,8-tetrahydrofolate + L-methionine. Its pathway is amino-acid biosynthesis; L-methionine biosynthesis via de novo pathway; L-methionine from L-homocysteine (MetH route): step 1/1. Functionally, catalyzes the transfer of a methyl group from methyl-cobalamin to homocysteine, yielding enzyme-bound cob(I)alamin and methionine. Subsequently, remethylates the cofactor using methyltetrahydrofolate. The polypeptide is Methionine synthase (metH) (Vibrio vulnificus (strain CMCP6)).